Consider the following 210-residue polypeptide: NAD(P)H-hydrate epimerase (210 aa).

A YjeF N-terminal domain is found at 11-210 (AHNFDDYTIN…TVADIGIYEP (200 aa)). 60–64 (NNGGD) contacts (6S)-NADPHX. Residues N61 and D123 each contribute to the K(+) site. (6S)-NADPHX-binding positions include 127-133 (GVGLSRD) and D156. T159 serves as a coordination point for K(+).

Belongs to the NnrE/AIBP family. K(+) is required as a cofactor.

The enzyme catalyses (6R)-NADHX = (6S)-NADHX. It catalyses the reaction (6R)-NADPHX = (6S)-NADPHX. Functionally, catalyzes the epimerization of the S- and R-forms of NAD(P)HX, a damaged form of NAD(P)H that is a result of enzymatic or heat-dependent hydration. This is a prerequisite for the S-specific NAD(P)H-hydrate dehydratase to allow the repair of both epimers of NAD(P)HX. This Oenococcus oeni (strain ATCC BAA-331 / PSU-1) protein is NAD(P)H-hydrate epimerase.